We begin with the raw amino-acid sequence, 1358 residues long: Phosphoinositide 3-kinase regulatory subunit 4 (1358 aa).

Residue G2 is the site of N-myristoyl glycine attachment. The Protein kinase domain occupies 26-324 (FEYDKSLGST…AFPEIFYTFL (299 aa)). Residues 32 to 40 (LGSTRFFKV) and K53 contribute to the ATP site. The active-site Proton acceptor is the D148. 3 HEAT repeats span residues 413–450 (ILLD…LVKE), 458–495 (IYPE…TALR), and 572–610 (KAND…YVGW). Phosphoserine occurs at positions 808, 813, 853, and 865. Residues 875 to 898 (LPKGSDQEVIQTGKPPRSESSAGI) are disordered. 6 WD repeats span residues 991–1030 (EHKS…GKTT), 1040–1079 (RIGG…LPKS), 1093–1134 (KEDG…NAWT), 1139–1178 (LKSG…PISS), 1182–1223 (PSRA…RRFT), and 1237–1278 (PSPH…RSYV). The interval 1307-1326 (KQKVGPSDDTPRRGPESLPV) is disordered. Residues 1315–1326 (DTPRRGPESLPV) are compositionally biased toward basic and acidic residues. Residue T1316 is modified to Phosphothreonine. The stretch at 1327 to 1358 (GHHDIITDVATFQTTQGFIVTASRDGIVKVWK) is one WD 7 repeat.

It belongs to the protein kinase superfamily. Ser/Thr protein kinase family. As to quaternary structure, component of the PI3K (PI3KC3/PI3K-III/class III phosphatidylinositol 3-kinase) complex the core of which is composed of the catalytic subunit PIK3C3, the regulatory subunit PIK3R4 and BECN1 associating with additional regulatory/auxiliary subunits to form alternative complex forms. Alternative complex forms containing a fourth regulatory subunit in a mutually exclusive manner are PI3K complex I (PI3KC3-C1) containing ATG14, and PI3K complex II (PI3KC3-C2) containing UVRAG. PI3KC3-C1 displays a V-shaped architecture with PIK3R4 serving as a bridge between PIK3C3 and the ATG14:BECN1 subcomplex. Both, PI3KC3-C1 and PI3KC3-C2, can associate with further regulatory subunits, such as RUBCN, SH3GLB1/Bif-1, AMBRA1 and NRBF2. PI3KC3-C1 probably associates with PIK3CB. Interacts with RAB7A in the presence of PIK3C3/VPS34. Interacts with NRBF2. Interacts with ARMC3. Mn(2+) serves as cofactor. Post-translationally, myristoylated. Probably autophosphorylated. In terms of tissue distribution, ubiquitously expressed.

It localises to the late endosome. The protein resides in the cytoplasmic vesicle. It is found in the autophagosome. The protein localises to the membrane. It carries out the reaction L-seryl-[protein] + ATP = O-phospho-L-seryl-[protein] + ADP + H(+). It catalyses the reaction L-threonyl-[protein] + ATP = O-phospho-L-threonyl-[protein] + ADP + H(+). Regulatory subunit of the PI3K complex that mediates formation of phosphatidylinositol 3-phosphate; different complex forms are believed to play a role in multiple membrane trafficking pathways: PI3KC3-C1 is involved in initiation of autophagosomes and PI3KC3-C2 in maturation of autophagosomes and endocytosis. Involved in regulation of degradative endocytic trafficking and cytokinesis, probably in the context of PI3KC3-C2. In Homo sapiens (Human), this protein is Phosphoinositide 3-kinase regulatory subunit 4 (PIK3R4).